Here is a 621-residue protein sequence, read N- to C-terminus: tRNA uridine 5-carboxymethylaminomethyl modification enzyme MnmG (621 aa).

Position 9 to 14 (9 to 14 (GGGHAG)) interacts with FAD. 270 to 284 (GPRYCPSIEDKIVKF) contacts NAD(+).

The protein belongs to the MnmG family. As to quaternary structure, homodimer. Heterotetramer of two MnmE and two MnmG subunits. FAD is required as a cofactor.

The protein resides in the cytoplasm. In terms of biological role, NAD-binding protein involved in the addition of a carboxymethylaminomethyl (cmnm) group at the wobble position (U34) of certain tRNAs, forming tRNA-cmnm(5)s(2)U34. The polypeptide is tRNA uridine 5-carboxymethylaminomethyl modification enzyme MnmG (Borreliella afzelii (strain PKo) (Borrelia afzelii)).